We begin with the raw amino-acid sequence, 181 residues long: Adenine phosphoribosyltransferase (181 aa).

It belongs to the purine/pyrimidine phosphoribosyltransferase family. In terms of assembly, homodimer.

The protein localises to the cytoplasm. It catalyses the reaction AMP + diphosphate = 5-phospho-alpha-D-ribose 1-diphosphate + adenine. Its pathway is purine metabolism; AMP biosynthesis via salvage pathway; AMP from adenine: step 1/1. Its function is as follows. Catalyzes a salvage reaction resulting in the formation of AMP, that is energically less costly than de novo synthesis. The protein is Adenine phosphoribosyltransferase of Psychromonas ingrahamii (strain DSM 17664 / CCUG 51855 / 37).